The sequence spans 640 residues: MGRRSTSSTKSGKFMNPTDQARKEARKRELKKNKKQRMMVRAAVLKMKDPRQIIRDMEKLDEMEFNPVQQPLLNEKVLRDKRKKLRETFERIVRLYERENPETYKELRKLELEYETKRGQLSLYFDSVKNAESVEVDSIPLPEMPHAPSSILIQDIPLPGAQPPSILKKSSALGKASSLSAAALAGVPRLPAGRKPPGPPPGPPPPQILQLYGNTRRTEASAGSDTEMMDGGRDSDSKSEADEESDSQEDSSAEREDSDRGERDEERERADKHTGRSVRFADMPSPNKKKRRVVKTKSITPLQAMMLRMAGQSVPEEEEEDEEEEYSESEDSEAEDQASTDAPQPLVNPRLPVPSAPMAAQQPPSLMQAPPITGPPPLGPPPAPPMRPPGPPSGPPPGPPPGAPPFLRPPGLPSALRGPMPRLLPPGPPPGRPPGPPPGPPPGLPPGPPPRGPPPRLPPPAPPGMPPPPPPPRAGPPRMAPPLSLFPPPLNPNVLSAPPSIVPRQKSPAASSNEGAPSGSALQMPPPPGTTANPLAPTIEKRATVAGSGGASAQGGGATISAKPQIINPKAEVTRFVPTALRVRRDRAGGTGRREEERPPANQQTPAHQAPPIAHAPTPPNLKTKDQVYEAFMREMEGLL.

The segment covering 1-11 (MGRRSTSSTKS) has biased composition (polar residues). Residues 1-37 (MGRRSTSSTKSGKFMNPTDQARKEARKRELKKNKKQR) are disordered. Residues 28-37 (RELKKNKKQR) show a composition bias toward basic residues. A coiled-coil region spans residues 75-122 (EKVLRDKRKKLRETFERIVRLYERENPETYKELRKLELEYETKRGQLS). Disordered stretches follow at residues 155-174 (DIPLPGAQPPSILKKSSALG), 187-563 (VPRL…ISAK), and 582-625 (RVRR…LKTK). Over residues 194 to 207 (RKPPGPPPGPPPPQ) the composition is skewed to pro residues. Basic and acidic residues predominate over residues 230 to 240 (DGGRDSDSKSE). Residues 241-251 (ADEESDSQEDS) are compositionally biased toward acidic residues. The segment covering 252–274 (SAEREDSDRGERDEERERADKHT) has biased composition (basic and acidic residues). At Ser-285 the chain carries Phosphoserine. Positions 315 to 338 (PEEEEEDEEEEYSESEDSEAEDQA) are enriched in acidic residues. Positions 356-371 (APMAAQQPPSLMQAPP) are enriched in low complexity. Pro residues-rich tracts occupy residues 372–412 (ITGP…PPGL) and 422–491 (RLLP…PPLN). The PGR signature appears at 421-432 (PRLLPPGPPPGR). Over residues 547–558 (GSGGASAQGGGA) the composition is skewed to gly residues. The span at 586–599 (DRAGGTGRREEERP) shows a compositional bias: basic and acidic residues. Over residues 603–616 (QQTPAHQAPPIAHA) the composition is skewed to low complexity.

The protein resides in the cytoplasm. It localises to the nucleus. Functionally, activates pre-mRNA splicing. The chain is WW domain-binding protein 11 (wbp11) from Danio rerio (Zebrafish).